We begin with the raw amino-acid sequence, 1050 residues long: Beta-galactosidase (1050 aa).

Asn-100 and Asp-199 together coordinate substrate. Asp-199 contributes to the Na(+) binding site. Residues Glu-422, His-424, and Glu-467 each contribute to the Mg(2+) site. Substrate is bound by residues Glu-467 and 543-546 (EYAH). Glu-467 (proton donor) is an active-site residue. Catalysis depends on Glu-543, which acts as the Nucleophile. Mg(2+) is bound at residue Asn-603. Na(+) is bound by residues Phe-607 and Asn-610. Residues Asn-610 and Trp-1025 each contribute to the substrate site.

This sequence belongs to the glycosyl hydrolase 2 family. In terms of assembly, homotetramer. Mg(2+) serves as cofactor. It depends on Na(+) as a cofactor.

The enzyme catalyses Hydrolysis of terminal non-reducing beta-D-galactose residues in beta-D-galactosides.. The polypeptide is Beta-galactosidase (Yersinia pestis bv. Antiqua (strain Angola)).